Reading from the N-terminus, the 63-residue chain is Large ribosomal subunit protein uL29 (63 aa).

It belongs to the universal ribosomal protein uL29 family.

The sequence is that of Large ribosomal subunit protein uL29 from Aeromonas salmonicida (strain A449).